A 249-amino-acid polypeptide reads, in one-letter code: ATP synthase subunit a (249 aa).

Helical transmembrane passes span 30-50 (SLYM…GSAG), 84-104 (FFPL…IGVI), 114-134 (LIVT…YGLY), 143-163 (VFVP…IEVI), 193-213 (FVTS…LPLA), and 220-240 (ILEV…TCIY).

Belongs to the ATPase A chain family. In terms of assembly, F-type ATPases have 2 components, CF(1) - the catalytic core - and CF(0) - the membrane proton channel. CF(1) has five subunits: alpha(3), beta(3), gamma(1), delta(1), epsilon(1). CF(0) has three main subunits: a(1), b(2) and c(9-12). The alpha and beta chains form an alternating ring which encloses part of the gamma chain. CF(1) is attached to CF(0) by a central stalk formed by the gamma and epsilon chains, while a peripheral stalk is formed by the delta and b chains.

The protein resides in the cell inner membrane. Its function is as follows. Key component of the proton channel; it plays a direct role in the translocation of protons across the membrane. This Afipia carboxidovorans (strain ATCC 49405 / DSM 1227 / KCTC 32145 / OM5) (Oligotropha carboxidovorans) protein is ATP synthase subunit a.